A 157-amino-acid chain; its full sequence is BPTI/Kunitz domain-containing protein 3 (157 aa).

A signal peptide spans 1 to 16; it reads MIRLVTLAALPVLVLC. 2 BPTI/Kunitz inhibitor domains span residues 42–95 and 97–151; these read CLKY…MKSC and CKQQ…FFTC. 5 disulfide bridges follow: C42/C95, C70/C91, C97/C151, C107/C134, and C126/C147.

In terms of tissue distribution, nacreous layer of shell (at protein level).

It is found in the secreted. This is BPTI/Kunitz domain-containing protein 3 from Margaritifera margaritifera (Freshwater pearl mussel).